The primary structure comprises 682 residues: DNA ligase (682 aa).

NAD(+) contacts are provided by residues D42 to D46, S91 to L92, and E124. The active-site N6-AMP-lysine intermediate is the K126. NAD(+)-binding residues include R147, E184, K302, and K326. Residues C420, C423, C438, and C444 each coordinate Zn(2+). The region spanning I603–N682 is the BRCT domain.

This sequence belongs to the NAD-dependent DNA ligase family. LigA subfamily. Mg(2+) serves as cofactor. It depends on Mn(2+) as a cofactor.

The enzyme catalyses NAD(+) + (deoxyribonucleotide)n-3'-hydroxyl + 5'-phospho-(deoxyribonucleotide)m = (deoxyribonucleotide)n+m + AMP + beta-nicotinamide D-nucleotide.. In terms of biological role, DNA ligase that catalyzes the formation of phosphodiester linkages between 5'-phosphoryl and 3'-hydroxyl groups in double-stranded DNA using NAD as a coenzyme and as the energy source for the reaction. It is essential for DNA replication and repair of damaged DNA. The chain is DNA ligase from Actinobacillus pleuropneumoniae serotype 7 (strain AP76).